We begin with the raw amino-acid sequence, 356 residues long: Histidinol-phosphate aminotransferase 1 (356 aa).

At Lys-213 the chain carries N6-(pyridoxal phosphate)lysine.

Belongs to the class-II pyridoxal-phosphate-dependent aminotransferase family. Histidinol-phosphate aminotransferase subfamily. As to quaternary structure, homodimer. It depends on pyridoxal 5'-phosphate as a cofactor.

It carries out the reaction L-histidinol phosphate + 2-oxoglutarate = 3-(imidazol-4-yl)-2-oxopropyl phosphate + L-glutamate. Its pathway is amino-acid biosynthesis; L-histidine biosynthesis; L-histidine from 5-phospho-alpha-D-ribose 1-diphosphate: step 7/9. The sequence is that of Histidinol-phosphate aminotransferase 1 from Burkholderia pseudomallei (strain K96243).